Reading from the N-terminus, the 63-residue chain is uncharacterized protein (63 aa).

A helical transmembrane segment spans residues 38–58 (ISLFIILHLCLLVCLLLSFYF).

It localises to the membrane. This is an uncharacterized protein from Saccharomyces cerevisiae (strain ATCC 204508 / S288c) (Baker's yeast).